A 65-amino-acid polypeptide reads, in one-letter code: MPKMKSKSGAAKRFRALGGGGFKRSHAFMRHILTKKSTKRKRQLRGMETVNASNHKAVARMLPYA.

It belongs to the bacterial ribosomal protein bL35 family.

This Thiobacillus denitrificans (strain ATCC 25259 / T1) protein is Large ribosomal subunit protein bL35.